A 468-amino-acid chain; its full sequence is Protein C-ets-2 (468 aa).

The PNT domain occupies 85–170 (ATFSGFQKEQ…EHLEQMIKEN (86 aa)). A phosphoserine mark is found at S220 and S225. The tract at residues 262 to 290 (VNLLNNNSGKPKDHDSPENGGDSFESSDS) is disordered. S294, S297, and S300 each carry phosphoserine. Residues 362-442 (IQLWQFLLEL…SGKRYVYRFV (81 aa)) constitute a DNA-binding region (ETS).

It belongs to the ETS family. Phosphorylation by CDK10 at Ser-220 and Ser-225 creates a phosphodegron that targets ETS2 for proteasomal degradation.

It is found in the nucleus. Its function is as follows. Transcription factor activating transcription. Binds specifically the GGA DNA motif in gene promoters and stimulates transcription of those genes. In Mus musculus (Mouse), this protein is Protein C-ets-2 (Ets2).